Reading from the N-terminus, the 439-residue chain is Phenylacetate-coenzyme A ligase (439 aa).

The protein belongs to the phenylacetyl-CoA ligase family. Monomer.

The catalysed reaction is 2-phenylacetate + ATP + CoA = phenylacetyl-CoA + AMP + diphosphate. Its pathway is aromatic compound metabolism; phenylacetate degradation. Its activity is regulated as follows. Inhibited by divalent cations (zinc, copper, mercury) and by the sulfhydryl reagents 5,5-dithiobis(2-nitrobenzoic acid), N-ethylmaleimide and p-chloromercuribenzoate. Its function is as follows. Catalyzes the activation of phenylacetic acid (PA) to phenylacetyl-CoA (PA-CoA). Involved in the phenylalanine metabolism. Can also use CTP and UTP as substrate. The chain is Phenylacetate-coenzyme A ligase (paaK) from Pseudomonas putida (Arthrobacter siderocapsulatus).